Consider the following 653-residue polypeptide: Forkhead box protein O1 (653 aa).

Disordered stretches follow at residues 1–64 (MAEA…ASAA) and 117–156 (LHPAPPQPPPPGPLSQHPPVPPAAGPLAGQPRKSSSSRRN). Thr-24 carries the phosphothreonine; by PKB/AKT1 or PKB/AKT2 and SGK1 modification. The segment covering 35–64 (SNSATSSPAPSGGATANPDASAGLPPASAA) has biased composition (low complexity). The span at 119–140 (PAPPQPPPPGPLSQHPPVPPAA) shows a compositional bias: pro residues. Residues 157–233 (AWGNLSYADL…VQNEGTGKSS (77 aa)) constitute a DNA-binding region (fork-head). DNA-binding stretches follow at residues 209–216 (NSIRHNLS) and 232–235 (SSWW). Ser-210 bears the Phosphoserine; by STK4/MST1 mark. Ser-216, Ser-232, and Ser-233 each carry phosphoserine. Residues 232 to 335 (SSWWMLNPEG…FSPIMTEQDD (104 aa)) are disordered. 2 positions are modified to N6-acetyllysine: Lys-243 and Lys-246. Ser-247 carries the post-translational modification Phosphoserine; by CDK1. Residues Arg-249 and Arg-251 each carry the omega-N-methylarginine; by PRMT1 modification. Residues 249–251 (RRR) carry the Nuclear localization signal motif. Ser-254 bears the Phosphoserine; by PKB/AKT1 and SGK1 mark. An N6-acetyllysine mark is found at Lys-260, Lys-263, and Lys-272. Positions 281 to 561 (GAGDSPGSQF…RLTPVKTPLQ (281 aa)) are sufficient for interaction with NLK. Phosphoserine is present on residues Ser-285 and Ser-296. The segment covering 307-324 (NWSTFRPRTSSNASTISG) has biased composition (polar residues). Ser-317 bears the Phosphoserine; by PKB/AKT1 or PKB/AKT2 mark. Residue Ser-320 is modified to Phosphoserine; by CK1 and SGK1. Phosphoserine is present on Ser-323. Phosphoserine; by DYRK1A is present on Ser-327. Phosphothreonine is present on Thr-331. The segment at 361-457 (SEISNPENME…GGLNQFNCAQ (97 aa)) is required for interaction with RUNX2. Residue Lys-421 is modified to N6-acetyllysine. Residues 460 to 464 (LKELL) carry the Required for interaction with SIRT1 motif.

As to quaternary structure, interacts with LRPPRC. Interacts with RUNX2; the interaction inhibits RUNX2 transcriptional activity and mediates the IGF1/insulin-dependent BGLAP expression in osteoblasts Interacts with PPP2R1A; the interaction regulates the dephosphorylation of FOXO1 at Thr-24 and Ser-254 leading to its nuclear import. Interacts with NLK. Interacts with SIRT1; the interaction results in the deacetylation of FOXO1 leading to activation of FOXO1-mediated transcription of genes involved in DNA repair and stress resistance. Binds to CDK1. Interacts with the 14-3-3 proteins, YWHAG and YWHAZ; the interactions require insulin-stimulated phosphorylation on Thr-24, promote nuclear exit and loss of transcriptional activity. Interacts with SKP2; the interaction ubiquitinates FOXO1 leading to its proteasomal degradation. The interaction requires the presence of KRIT1. Interacts (via the C-terminal half) with ATF4 (via its DNA-binding domain); the interaction occurs in osteoblasts, regulates glucose homeostasis via suppression of beta-cell proliferation and subsequent decrease in insulin production. Interacts with PRMT1; the interaction methylates FOXO1, prevents PKB/AKT1 phosphorylation and retains FOXO1 in the nucleus. Interacts with EP300 and CREBBP; the interactions acetylate FOXO1. Interacts with SIRT2; the interaction is disrupted in response to oxidative stress or serum deprivation, leading to increased level of acetylated FOXO1, which promotes stress-induced autophagy by stimulating E1-like activating enzyme ATG7. Interacts (acetylated form) with ATG7; the interaction is increased in response to oxidative stress or serum deprivation and promotes the autophagic process leading to cell death. Interacts (acetylated form) with PPARG. Interacts with XBP1; this interaction is direct and leads to FOXO1 ubiquitination and degradation via the proteasome pathway. Interacts with WDFY2. Forms a complex with WDFY2 and AKT1. Interacts with CRY1. Interacts with PPIA/CYPA; the interaction promotes FOXO1 dephosphorylation, nuclear accumulation and transcriptional activity. Interacts with TOX4; FOXO1 is required for full induction of TOX4-dependent activity and the interaction is inhibited by insulin. Interacts (when phosphorylated on Ser-254) with STUB1/CHIP. In terms of processing, phosphorylation by NLK promotes nuclear export and inhibits the transcriptional activity. In response to growth factors, phosphorylation on Thr-24, Ser-254 and Ser-320 by PKB/AKT1 promotes nuclear export and inactivation of transactivational activity. Phosphorylation on Thr-24 is required for binding 14-3-3 proteins. Phosphorylation of Ser-254 decreases DNA-binding activity and promotes the phosphorylation of Thr-24 and Ser-317, permitting phosphorylation of Ser-320 and Ser-323, probably by CDK1, leading to nuclear exclusion and loss of function. Stress signals, such as response to oxygen or nitric oxide, attenuate the PKB/AKT1-mediated phosphorylation leading to nuclear retention. Phosphorylation of Ser-327 is independent of IGF1 and leads to reduced function. Dephosphorylated on Thr-24 and Ser-254 by PP2A in beta-cells under oxidative stress leading to nuclear retention. Phosphorylation of Ser-247 by CDK1 disrupts binding of 14-3-3 proteins leading to nuclear accumulation and has no effect on DNA binding nor transcriptional activity. Phosphorylation by STK4/MST1 on Ser-210, upon oxidative stress, inhibits binding to 14-3-3 proteins and nuclear export. PPIA/CYPA promotes its dephosphorylation on Ser-254. Ubiquitinated by SKP2. Ubiquitination leads to proteasomal degradation. Ubiquitinated by STUB1/CHIP; when Ser-254 is phosphorylated. Post-translationally, methylation inhibits AKT1-mediated phosphorylation at Ser-254 and is increased by oxidative stress. In terms of processing, acetylated. Acetylation at Lys-260 and Lys-272 are necessary for autophagic cell death induction. Deacetylated by SIRT2 in response to oxidative stress or serum deprivation, thereby negatively regulating FOXO1-mediated autophagic cell death. Once in the nucleus, acetylated by CREBBP/EP300. Acetylation diminishes the interaction with target DNA and attenuates the transcriptional activity. It increases the phosphorylation at Ser-254. Deacetylation by SIRT1 results in reactivation of the transcriptional activity. Oxidative stress by hydrogen peroxide treatment appears to promote deacetylation and uncoupling of insulin-induced phosphorylation. By contrast, resveratrol acts independently of acetylation. Acetylated at Lys-421, promoting its localization to the nucleus and transcription factor activity. Deacetylation at Lys-421 by SIRT6, promotes its translocation into the cytoplasm, preventing its transcription factor activity. Deacetylation and subsequent inhibition by SIRT6 has different effects depending on cell types: it inhibits gluconeogenesis in hepatocytes, promotes glucose sensing in pancreatic beta-cells and regulates lipid catabolism in brown adipocytes.

The protein localises to the cytoplasm. It is found in the nucleus. Transcription factor that is the main target of insulin signaling and regulates metabolic homeostasis in response to oxidative stress. Binds to the insulin response element (IRE) with consensus sequence 5'-TT[G/A]TTTTG-3' and the related Daf-16 family binding element (DBE) with consensus sequence 5'-TT[G/A]TTTAC-3'. Activity suppressed by insulin. Main regulator of redox balance and osteoblast numbers and controls bone mass. Orchestrates the endocrine function of the skeleton in regulating glucose metabolism. Also acts as a key regulator of chondrogenic commitment of skeletal progenitor cells in response to lipid availability: when lipids levels are low, translocates to the nucleus and promotes expression of SOX9, which induces chondrogenic commitment and suppresses fatty acid oxidation. Acts synergistically with ATF4 to suppress osteocalcin/BGLAP activity, increasing glucose levels and triggering glucose intolerance and insulin insensitivity. Also suppresses the transcriptional activity of RUNX2, an upstream activator of osteocalcin/BGLAP. Acts as an inhibitor of glucose sensing in pancreatic beta cells by acting as a transcription repressor and suppressing expression of PDX1. In hepatocytes, promotes gluconeogenesis by acting together with PPARGC1A and CEBPA to activate the expression of genes such as IGFBP1, G6PC1 and PCK1. Also promotes gluconeogenesis by directly promoting expression of PPARGC1A and G6PC1. Important regulator of cell death acting downstream of CDK1, PKB/AKT1 and STK4/MST1. Promotes neural cell death. Mediates insulin action on adipose tissue. Regulates the expression of adipogenic genes such as PPARG during preadipocyte differentiation and, adipocyte size and adipose tissue-specific gene expression in response to excessive calorie intake. Regulates the transcriptional activity of GADD45A and repair of nitric oxide-damaged DNA in beta-cells. Required for the autophagic cell death induction in response to starvation or oxidative stress in a transcription-independent manner. Mediates the function of MLIP in cardiomyocytes hypertrophy and cardiac remodeling. Positive regulator of apoptosis in cardiac smooth muscle cells as a result of its transcriptional activation of pro-apoptotic genes. Regulates endothelial cell (EC) viability and apoptosis in a PPIA/CYPA-dependent manner via transcription of CCL2 and BCL2L11 which are involved in EC chemotaxis and apoptosis. This Ictidomys tridecemlineatus (Thirteen-lined ground squirrel) protein is Forkhead box protein O1 (FOXO1).